A 57-amino-acid polypeptide reads, in one-letter code: Dendroaspis polylepis MT9 (57 aa).

4 disulfides stabilise this stretch: Cys3–Cys22, Cys17–Cys36, Cys38–Cys49, and Cys50–Cys55.

The protein belongs to the three-finger toxin family. Short-chain subfamily. Expressed by the venom gland.

It localises to the secreted. Functionally, when tested on muscarinic GPCR, specifically antagonizes the type 2 receptor (CHRM2) subtype (Ki/Kd=120-399 nM). Ex vivo, it reverses the M2R-agonist-induced relaxation in rat and human arteries. This Dendroaspis polylepis polylepis (Black mamba) protein is Dendroaspis polylepis MT9.